A 166-amino-acid polypeptide reads, in one-letter code: Endoribonuclease YbeY (166 aa).

The Zn(2+) site is built by His-111, His-115, and His-121. A disordered region spans residues 141–166; it reads LGYPDPYADDESADHPHSDTPSKDHE. A compositionally biased stretch (basic and acidic residues) spans 153–166; that stretch reads ADHPHSDTPSKDHE.

Belongs to the endoribonuclease YbeY family. It depends on Zn(2+) as a cofactor.

It is found in the cytoplasm. In terms of biological role, single strand-specific metallo-endoribonuclease involved in late-stage 70S ribosome quality control and in maturation of the 3' terminus of the 16S rRNA. This chain is Endoribonuclease YbeY, found in Pseudomonas syringae pv. tomato (strain ATCC BAA-871 / DC3000).